The chain runs to 355 residues: Ubiquinone biosynthesis protein COQ4 homolog, mitochondrial (355 aa).

Residues His134, Asp135, His138, and Glu150 each contribute to the Zn(2+) site.

The protein belongs to the COQ4 family. In terms of assembly, component of a multi-subunit COQ enzyme complex. It depends on Zn(2+) as a cofactor.

The protein localises to the mitochondrion inner membrane. The catalysed reaction is a 4-hydroxy-3-methoxy-5-(all-trans-polyprenyl)benzoate + H(+) = a 2-methoxy-6-(all-trans-polyprenyl)phenol + CO2. The protein operates within cofactor biosynthesis; ubiquinone biosynthesis. In terms of biological role, lyase that catalyzes the C1-decarboxylation of 4-hydroxy-3-methoxy-5-(all-trans-polyprenyl)benzoic acid into 2-methoxy-6-(all-trans-polyprenyl)phenol during ubiquinone biosynthesis. In Plasmodium knowlesi (strain H), this protein is Ubiquinone biosynthesis protein COQ4 homolog, mitochondrial.